We begin with the raw amino-acid sequence, 586 residues long: MFLQLFNIVLIYGVRTSQSTWINYPENCTSISLQDGLRELCGGDQLMNIRNQLLDDTYKEIGEICTPNYSMEKKSEGYRCASIKKKVICKMLENFDHEVTYISESHPIDKAKCHELIINKDLLNNIEEPYYPPPKCDSSKSSVSELEFIKLINYDVILDPVGFQNEDNYLFQFDKTNPIPIDYIYQSEFCQSKNWICHGDKSYIPLEIFKGDNQASIRLELIKLSIIYDSNFGELPIRDACRLHYCGKPAIKLFNGAIIKIKESPIVLGLPSCNRSRIEMPETNLAKKRYSNVGPVLLTTLNKRFELCKKIKKNLELKQPIPINNLHYLAPFEPGKHPALVYRLVSTTINQSLRNKVVPVSMLSMSMCEYITGQIIEDGIKRNLTDEDTVIILANNKEIKWKDLKGRENWYQEQANPNIIDKNPDHLSYYWYNGVMRREDKFTYPSRYILQTLKKIYTDTERESRISFFKFRLERNITKTEVIKFRDIEESSDQDHSQSVNKTLEGDDYWNWVEETTSDKNKTDGSRGDEKQTIQNKEYWNEESSIWGISTIITVLGIYYIYRKNRREKIFLNMKHRVQRFFKLDY.

Positions 1 to 14 (MFLQLFNIVLIYGV) are cleaved as a signal peptide. Topologically, residues 15-544 (RTSQSTWINY…QNKEYWNEES (530 aa)) are extracellular. Asn-27, Asn-68, Asn-274, Asn-350, Asn-383, Asn-476, Asn-501, and Asn-521 each carry an N-linked (GlcNAc...) asparagine; by host glycan. Residues 545–562 (SIWGISTIITVLGIYYIY) traverse the membrane as a helical segment. Residues 563-586 (RKNRREKIFLNMKHRVQRFFKLDY) are Cytoplasmic-facing.

The protein belongs to the ephemerovirus glycoprotein family.

It localises to the host membrane. The polypeptide is Non-structural glycoprotein GNS (GNS) (Bos taurus (Bovine)).